A 183-amino-acid chain; its full sequence is Beta-defensin 129 (183 aa).

A signal peptide spans 1-19; the sequence is MKLLFPIFASLMLQYQVNT. Intrachain disulfides connect cysteine 27/cysteine 53, cysteine 34/cysteine 48, and cysteine 38/cysteine 54. Residues 142–183 are disordered; sequence ATSAKSNTKESGDSATASPPPAPPPPNILPTPSLELEEAEEQ. Residues 159-170 are compositionally biased toward pro residues; sequence SPPPAPPPPNIL.

This sequence belongs to the beta-defensin family.

Its subcellular location is the secreted. In terms of biological role, has antibacterial activity. The protein is Beta-defensin 129 (DEFB129) of Macaca fascicularis (Crab-eating macaque).